Consider the following 1438-residue polypeptide: Pyochelin synthetase PchE (1438 aa).

The region spanning 6–85 is the Carrier 1 domain; it reads DSRTALRDWL…AWLDLLACAD (80 aa). Position 46 is an O-(pantetheine 4'-phosphoryl)serine (Ser-46). Positions 136-442 are condensation/cyclization; the sequence is RTRDVDPQRL…ARRQGQPRSA (307 aa). An adenylation region spans residues 563-950; that stretch reads RAAEAPDADA…GRVDQQVKVR (388 aa). Residues 1350 to 1425 enclose the Carrier 2 domain; sequence EPLEAHEQAL…GLARHLQVQT (76 aa). An O-(pantetheine 4'-phosphoryl)serine modification is found at Ser-1385.

It belongs to the NRP synthetase family. Pantetheine 4'-phosphate is required as a cofactor.

The catalysed reaction is holo-[peptidyl-carrier protein] + L-cysteine + ATP = L-cysteinyl-[peptidyl-carrier protein] + AMP + diphosphate. Its pathway is siderophore biosynthesis. The protein operates within antifungal biosynthesis. Functionally, involved in the biosynthesis of the siderophore pyochelin. Accepts salicylate activated by PchD at the first peptidyl carrier domain (ArCP), and activates and fixes one molecule of cysteine at the second peptidyl carrier domain (PCP1) via a thioester linkage to the phosphopanthetheine moiety. Then catalyzes the condensation reaction between the salicylate bound to the first site and the cysteine bound to the second site, and the cyclization of the cysteine to form the salicyl-thiazolinyl-S-PCP1 intermediate at the second site. When this intermediate is released by the action of a thioesterase, it produces the antifungal antibiotic dihydroaeruginoic acid (Dha or hydroxyphenyl-thiazolinyl-carboxylate). The sequence is that of Pyochelin synthetase PchE from Pseudomonas aeruginosa (strain ATCC 15692 / DSM 22644 / CIP 104116 / JCM 14847 / LMG 12228 / 1C / PRS 101 / PAO1).